A 144-amino-acid chain; its full sequence is Large ribosomal subunit protein uL15 (144 aa).

Residues 1-53 (MRLNTLSPAEGAKHNAKRLGRGIGSGLGKTSGRGHKGQKARTGGGVRRGFEGG) form a disordered region. Over residues 21-31 (RGIGSGLGKTS) the composition is skewed to gly residues.

This sequence belongs to the universal ribosomal protein uL15 family. As to quaternary structure, part of the 50S ribosomal subunit.

Binds to the 23S rRNA. This chain is Large ribosomal subunit protein uL15, found in Histophilus somni (strain 129Pt) (Haemophilus somnus).